The following is a 149-amino-acid chain: Arginine repressor (149 aa).

It belongs to the ArgR family.

It localises to the cytoplasm. The protein operates within amino-acid biosynthesis; L-arginine biosynthesis [regulation]. Its function is as follows. Regulates arginine biosynthesis genes. The polypeptide is Arginine repressor (Oceanobacillus iheyensis (strain DSM 14371 / CIP 107618 / JCM 11309 / KCTC 3954 / HTE831)).